Here is a 117-residue protein sequence, read N- to C-terminus: Immunoglobulin kappa variable 1-16 (117 aa).

The signal sequence occupies residues 1–22 (MDMRVLAQLLGLLLLCFPGARC). Residues 23-45 (DIQMTQSPSSLSASVGDRVTITC) are framework-1. In terms of domain architecture, Ig-like spans 24–117 (IQMTQSPSSL…YYCQQYNSYP (94 aa)). Cys45 and Cys110 form a disulfide bridge. Positions 46 to 56 (RASQGISNYLA) are complementarity-determining-1. A framework-2 region spans residues 57–71 (WFQQKPGKAPKSLIY). Positions 72 to 78 (AASSLQS) are complementarity-determining-2. The framework-3 stretch occupies residues 79-110 (GVPSKFSGSGSGTDFTLTISSLQPEDFATYYC). Residues 111–117 (QQYNSYP) are complementarity-determining-3.

As to quaternary structure, immunoglobulins are composed of two identical heavy chains and two identical light chains; disulfide-linked.

It localises to the secreted. It is found in the cell membrane. V region of the variable domain of immunoglobulin light chains that participates in the antigen recognition. Immunoglobulins, also known as antibodies, are membrane-bound or secreted glycoproteins produced by B lymphocytes. In the recognition phase of humoral immunity, the membrane-bound immunoglobulins serve as receptors which, upon binding of a specific antigen, trigger the clonal expansion and differentiation of B lymphocytes into immunoglobulins-secreting plasma cells. Secreted immunoglobulins mediate the effector phase of humoral immunity, which results in the elimination of bound antigens. The antigen binding site is formed by the variable domain of one heavy chain, together with that of its associated light chain. Thus, each immunoglobulin has two antigen binding sites with remarkable affinity for a particular antigen. The variable domains are assembled by a process called V-(D)-J rearrangement and can then be subjected to somatic hypermutations which, after exposure to antigen and selection, allow affinity maturation for a particular antigen. This is Immunoglobulin kappa variable 1-16 from Homo sapiens (Human).